We begin with the raw amino-acid sequence, 321 residues long: Mas-related G-protein coupled receptor member H (321 aa).

The Extracellular portion of the chain corresponds to 1–35 (MEPLAMTLYPLESTQPTRNKTPNETTWSSEHTDDH). Asn23 carries N-linked (GlcNAc...) asparagine glycosylation. The helical transmembrane segment at 36-56 (TYFLVSLVICSLGLAGNGLLI) threads the bilayer. At 57 to 71 (WFLIFCIKRKPFTIY) the chain is on the cytoplasmic side. A helical membrane pass occupies residues 72–92 (ILHLAIADFMVLLCSSIMKLV). Residues 93–102 (NTFHIYNMTL) lie on the Extracellular side of the membrane. Asn99 is a glycosylation site (N-linked (GlcNAc...) asparagine). Residues 103-126 (ESYAILFMIFGYNTGLHLLTAISV) traverse the membrane as a helical segment. Residues 127-147 (ERCLSVLYPIWYQCQRPKHQS) are Cytoplasmic-facing. Residues 148–168 (AVACMLLWALSVLVSGLENFF) form a helical membrane-spanning segment. Over 169-188 (CILEVKPQFPECRYVYIFSC) the chain is Extracellular. A helical membrane pass occupies residues 189–209 (ILTFLVFVPLMIFSNLILFIQ). Over 210-225 (VCCNLKPRQPTKLYVI) the chain is Cytoplasmic. Residues 226 to 246 (IMTTVILFLVFAMPMKVLLII) traverse the membrane as a helical segment. Gly247 is a topological domain (extracellular). A helical transmembrane segment spans residues 248–271 (YYSSSLDDSVWDSLPYLNMLSTIN). The Cytoplasmic portion of the chain corresponds to 272–320 (CSINPIVYFVVGSLRRKRSRKSLKEALQKVFEEKPVVASRENVTQFSLP).

The protein belongs to the G-protein coupled receptor 1 family. Mas subfamily.

The protein resides in the cell membrane. In terms of biological role, orphan receptor. May regulate nociceptor function and/or development, including the sensation or modulation of pain. The chain is Mas-related G-protein coupled receptor member H (Mrgprh) from Mus musculus (Mouse).